A 350-amino-acid polypeptide reads, in one-letter code: Ubiquitin carboxyl-terminal hydrolase 11 (350 aa).

One can recognise a USP domain in the interval 49 to 344 (KGLYNVSGND…SACLLFYEME (296 aa)). Cysteine 59 functions as the Nucleophile in the catalytic mechanism. Histidine 302 (proton acceptor) is an active-site residue.

The protein belongs to the peptidase C19 family.

The enzyme catalyses Thiol-dependent hydrolysis of ester, thioester, amide, peptide and isopeptide bonds formed by the C-terminal Gly of ubiquitin (a 76-residue protein attached to proteins as an intracellular targeting signal).. The polypeptide is Ubiquitin carboxyl-terminal hydrolase 11 (ubp11) (Schizosaccharomyces pombe (strain 972 / ATCC 24843) (Fission yeast)).